A 120-amino-acid polypeptide reads, in one-letter code: Large ribosomal subunit protein bL19 (120 aa).

It belongs to the bacterial ribosomal protein bL19 family.

In terms of biological role, this protein is located at the 30S-50S ribosomal subunit interface and may play a role in the structure and function of the aminoacyl-tRNA binding site. The protein is Large ribosomal subunit protein bL19 of Synechococcus sp. (strain ATCC 27144 / PCC 6301 / SAUG 1402/1) (Anacystis nidulans).